The chain runs to 203 residues: Small ribosomal subunit protein uS4 (203 aa).

Positions 93-156 constitute an S4 RNA-binding domain; that stretch reads RRLDNVVYRL…MKVPAILEAV (64 aa).

This sequence belongs to the universal ribosomal protein uS4 family. As to quaternary structure, part of the 30S ribosomal subunit. Contacts protein S5. The interaction surface between S4 and S5 is involved in control of translational fidelity.

Functionally, one of the primary rRNA binding proteins, it binds directly to 16S rRNA where it nucleates assembly of the body of the 30S subunit. Its function is as follows. With S5 and S12 plays an important role in translational accuracy. This Streptococcus pyogenes serotype M4 (strain MGAS10750) protein is Small ribosomal subunit protein uS4.